We begin with the raw amino-acid sequence, 293 residues long: Tumor necrosis factor receptor superfamily member 13B (293 aa).

Residues 1–165 (MSGLGRSRRG…SADQVALVYS (165 aa)) are Extracellular-facing. 2 TNFR-Cys repeats span residues 33–67 (SCPE…AFCR) and 70–104 (SCRK…AYFC). Disulfide bonds link cysteine 34/cysteine 47, cysteine 50/cysteine 62, cysteine 54/cysteine 66, cysteine 71/cysteine 86, cysteine 89/cysteine 100, and cysteine 93/cysteine 104. A disordered region spans residues 115–146 (PPELRRQRSGEVENNSDNSGRYQGLEHRGSEA). Residues 126 to 135 (VENNSDNSGR) are compositionally biased toward polar residues. N-linked (GlcNAc...) asparagine glycosylation occurs at asparagine 128. A helical; Signal-anchor for type III membrane protein transmembrane segment spans residues 166–186 (TLGLCLCAVLCCFLVAVACFL). Residues 187-293 (KKRGDPCSCQ…VPAQEGGPGA (107 aa)) are Cytoplasmic-facing. A disordered region spans residues 192 to 226 (PCSCQPRSRPRQSPAKSSQDHAMEAGSPVSTSPEP).

As to quaternary structure, binds TRAF2, TRAF5 and TRAF6. Binds the NH2-terminal domain of CAMLG with its C-terminus. In terms of tissue distribution, highly expressed in spleen, thymus, small intestine and peripheral blood leukocytes. Expressed in resting B-cells and activated T-cells, but not in resting T-cells.

It is found in the membrane. Functionally, receptor for TNFSF13/APRIL and TNFSF13B/TALL1/BAFF/BLYS that binds both ligands with similar high affinity. Mediates calcineurin-dependent activation of NF-AT, as well as activation of NF-kappa-B and AP-1. Involved in the stimulation of B- and T-cell function and the regulation of humoral immunity. The sequence is that of Tumor necrosis factor receptor superfamily member 13B (TNFRSF13B) from Homo sapiens (Human).